The following is a 388-amino-acid chain: Probable Na(+)/H(+) antiporter 3 (388 aa).

12 consecutive transmembrane segments (helical) span residues Glu-2–Leu-22, Ile-27–Ile-47, Thr-53–Val-73, Glu-81–Tyr-101, Leu-102–Ala-122, Ile-146–Ile-166, Val-175–Ser-195, Val-215–Val-235, Ala-263–Ile-283, Leu-294–Leu-314, Thr-325–Gly-345, and Glu-354–Val-374.

Belongs to the monovalent cation:proton antiporter 1 (CPA1) transporter (TC 2.A.36) family.

It localises to the cell membrane. Functionally, this is probably a Na(+)/H(+) antiporter. The chain is Probable Na(+)/H(+) antiporter 3 from Methanocaldococcus jannaschii (strain ATCC 43067 / DSM 2661 / JAL-1 / JCM 10045 / NBRC 100440) (Methanococcus jannaschii).